The sequence spans 351 residues: Caveolin-2 (351 aa).

The segment covering 1 to 14 (MTRQNTSESDNTQR) has biased composition (polar residues). Disordered stretches follow at residues 1-55 (MTRQ…QGIA), 71-93 (HRTS…YDNL), and 144-193 (QKGS…PEME). The Cytoplasmic portion of the chain corresponds to 1 to 261 (MTRQNTSESD…FEIVRIYSYK (261 aa)). Residues 22–31 (TVDDIDELTD) show a composition bias toward acidic residues. A compositionally biased stretch (basic residues) spans 38–51 (HHHHHHHHEHHHQH). Low complexity predominate over residues 167–184 (PAQQSAPPTQQSRPQTTS). Residues 262 to 290 (ILTLIFGLIIAFLGGILFALFAFLNIWIF) constitute an intramembrane region (helical). The Cytoplasmic segment spans residues 291 to 351 (RPILILTRMA…EVWEKHIHHV (61 aa)).

Belongs to the caveolin family. Homooligomer. In terms of tissue distribution, expressed in intracellular bodies in intestinal cells.

Its subcellular location is the golgi apparatus membrane. It localises to the cell membrane. The protein localises to the membrane. The protein resides in the caveola. It is found in the apical cell membrane. Functionally, may act as a scaffolding protein within caveolar membranes. Interacts directly with G-protein alpha subunits and can regulate their activity. Thought to have a role in the uptake of lipids and proteins in the intestinal cells; operates in the apical uptake of lipid markers and trafficking of yolk proteins. Affects fecundity and egg laying. In Caenorhabditis elegans, this protein is Caveolin-2 (cav-2).